Consider the following 290-residue polypeptide: MSAVAPRSRLSLYLDLIRWNRPAGWLVLVWPTLAALWVAADGFPGWHLLAVFVAGTVLMRSAGCTINDIADRDFDRHVKRTTQRPITSGQLGVREAALVGVVLTLVAFVLVLTTRWEAVAWSVPAVLFTILYPFTKRFFAMPQAFLGIAFNFGIVIAFAAVQGRVPATAWVLWLANLFLVLAYDTEYAMVDRDDDLKIGMKTSAITLGRFDVAAIMGFFVLCLGLTAWVLAPYGLGWPLWLGLGVAAAQVAWHFTLIKDRTREGCFTAFSKSHWIGAAIFAGVALGYLLR.

The next 8 membrane-spanning stretches (helical) occupy residues 33-53, 91-111, 116-136, 138-158, 165-185, 212-232, 237-257, and 269-289; these read LAAL…AVFV, LGVR…FVLV, WEAV…PFTK, FFAM…VIAF, VPAT…AYDT, VAAI…VLAP, WPLW…FTLI, and FSKS…GYLL.

It belongs to the UbiA prenyltransferase family. Requires Mg(2+) as cofactor.

It localises to the cell inner membrane. It catalyses the reaction all-trans-octaprenyl diphosphate + 4-hydroxybenzoate = 4-hydroxy-3-(all-trans-octaprenyl)benzoate + diphosphate. The protein operates within cofactor biosynthesis; ubiquinone biosynthesis. Catalyzes the prenylation of para-hydroxybenzoate (PHB) with an all-trans polyprenyl group. Mediates the second step in the final reaction sequence of ubiquinone-8 (UQ-8) biosynthesis, which is the condensation of the polyisoprenoid side chain with PHB, generating the first membrane-bound Q intermediate 3-octaprenyl-4-hydroxybenzoate. This Acidovorax ebreus (strain TPSY) (Diaphorobacter sp. (strain TPSY)) protein is 4-hydroxybenzoate octaprenyltransferase.